The following is a 268-amino-acid chain: Thiazole synthase (268 aa).

Lys96 (schiff-base intermediate with DXP) is an active-site residue. Residues Gly157, 185-186, and 207-208 each bind 1-deoxy-D-xylulose 5-phosphate; these read AG and NT. The segment at 238 to 268 is disordered; that stretch reads PMRPREAASPSSPVEGVPFTPTGPRPGRGPQ. The span at 258 to 268 shows a compositional bias: pro residues; the sequence is PTGPRPGRGPQ.

This sequence belongs to the ThiG family. In terms of assembly, homotetramer. Forms heterodimers with either ThiH or ThiS.

The protein resides in the cytoplasm. It carries out the reaction [ThiS sulfur-carrier protein]-C-terminal-Gly-aminoethanethioate + 2-iminoacetate + 1-deoxy-D-xylulose 5-phosphate = [ThiS sulfur-carrier protein]-C-terminal Gly-Gly + 2-[(2R,5Z)-2-carboxy-4-methylthiazol-5(2H)-ylidene]ethyl phosphate + 2 H2O + H(+). The protein operates within cofactor biosynthesis; thiamine diphosphate biosynthesis. Its function is as follows. Catalyzes the rearrangement of 1-deoxy-D-xylulose 5-phosphate (DXP) to produce the thiazole phosphate moiety of thiamine. Sulfur is provided by the thiocarboxylate moiety of the carrier protein ThiS. In vitro, sulfur can be provided by H(2)S. The polypeptide is Thiazole synthase (Thermus thermophilus (strain ATCC 27634 / DSM 579 / HB8)).